The chain runs to 466 residues: tRNA modification GTPase MnmE (466 aa).

Positions 25, 82, and 127 each coordinate (6S)-5-formyl-5,6,7,8-tetrahydrofolate. The region spanning 223-388 (GIKVVIAGQP…LRRQLLQIAG (166 aa)) is the TrmE-type G domain. N233 is a binding site for K(+). GTP is bound by residues 233 to 238 (NAGKSS), 252 to 258 (TPIAGTT), 277 to 280 (DTAG), 346 to 349 (NKAD), and 369 to 371 (SAR). S237 contributes to the Mg(2+) binding site. Residues T252, I254, and T257 each coordinate K(+). Position 258 (T258) interacts with Mg(2+). K466 contributes to the (6S)-5-formyl-5,6,7,8-tetrahydrofolate binding site.

Belongs to the TRAFAC class TrmE-Era-EngA-EngB-Septin-like GTPase superfamily. TrmE GTPase family. Homodimer. Heterotetramer of two MnmE and two MnmG subunits. The cofactor is K(+).

Its subcellular location is the cytoplasm. Functionally, exhibits a very high intrinsic GTPase hydrolysis rate. Involved in the addition of a carboxymethylaminomethyl (cmnm) group at the wobble position (U34) of certain tRNAs, forming tRNA-cmnm(5)s(2)U34. This chain is tRNA modification GTPase MnmE, found in Acidovorax sp. (strain JS42).